The sequence spans 449 residues: BPI fold-containing family B member 6 (449 aa).

The first 18 residues, 1–18 (MLCSLSLVLCGLLAGTRA), serve as a signal peptide directing secretion. Asparagine 115 is a glycosylation site (N-linked (GlcNAc...) asparagine). A disulfide bridge links cysteine 138 with cysteine 172.

It belongs to the BPI/LBP/Plunc superfamily. BPI/LBP family.

It is found in the secreted. The sequence is that of BPI fold-containing family B member 6 (Bpifb6) from Mus musculus (Mouse).